Here is a 409-residue protein sequence, read N- to C-terminus: Serine/threonine transporter SstT (409 aa).

Helical transmembrane passes span 17 to 37 (LVGQ…FFPA), 49 to 69 (FVSA…MASI), 83 to 103 (ILLL…IASF), 142 to 162 (ALIS…GIAF), 180 to 200 (VSLI…GLVA), 218 to 238 (LVVL…LIVF), 301 to 321 (GAAI…GIAV), 331 to 351 (VVAS…LLLI), and 357 to 377 (LFGI…IIAI).

The protein belongs to the dicarboxylate/amino acid:cation symporter (DAACS) (TC 2.A.23) family.

Its subcellular location is the cell inner membrane. The catalysed reaction is L-serine(in) + Na(+)(in) = L-serine(out) + Na(+)(out). It carries out the reaction L-threonine(in) + Na(+)(in) = L-threonine(out) + Na(+)(out). Its function is as follows. Involved in the import of serine and threonine into the cell, with the concomitant import of sodium (symport system). The sequence is that of Serine/threonine transporter SstT from Pseudomonas aeruginosa (strain LESB58).